A 396-amino-acid chain; its full sequence is Tyrosine--tRNA ligase (396 aa).

A 'HIGH' region motif is present at residues 39-48 (PTAPDLHLGH). The 'KMSKS' region motif lies at 223 to 227 (KMSKS). An ATP-binding site is contributed by Lys226. The S4 RNA-binding domain maps to 334–395 (LPVPQLLKQA…GKRKFARVTV (62 aa)).

This sequence belongs to the class-I aminoacyl-tRNA synthetase family. TyrS type 2 subfamily. Homodimer.

The protein resides in the cytoplasm. The catalysed reaction is tRNA(Tyr) + L-tyrosine + ATP = L-tyrosyl-tRNA(Tyr) + AMP + diphosphate + H(+). Catalyzes the attachment of tyrosine to tRNA(Tyr) in a two-step reaction: tyrosine is first activated by ATP to form Tyr-AMP and then transferred to the acceptor end of tRNA(Tyr). This is Tyrosine--tRNA ligase from Thiobacillus denitrificans (strain ATCC 25259 / T1).